We begin with the raw amino-acid sequence, 716 residues long: Calpain clp-4 (716 aa).

Residues 31-53 (DDDDKQEAPVAVSKAPKGKGSNH) form a disordered region. The Calpain catalytic domain maps to 240 to 536 (LFEDPEFPAT…FTQMEVCNLT (297 aa)). Residues C295, H452, and N476 contribute to the active site.

It belongs to the peptidase C2 family.

Its function is as follows. Calcium-regulated non-lysosomal thiol-protease which catalyzes limited proteolysis of substrates. Promotes starvation-induced muscle atrophy. The protein is Calpain clp-4 of Caenorhabditis elegans.